A 529-amino-acid polypeptide reads, in one-letter code: Bifunctional purine biosynthesis protein PurH (529 aa).

The 148-residue stretch at 2 to 149 (TDLHPVRRAL…KNHAFVNVVV (148 aa)) folds into the MGS-like domain.

The protein belongs to the PurH family.

It catalyses the reaction (6R)-10-formyltetrahydrofolate + 5-amino-1-(5-phospho-beta-D-ribosyl)imidazole-4-carboxamide = 5-formamido-1-(5-phospho-D-ribosyl)imidazole-4-carboxamide + (6S)-5,6,7,8-tetrahydrofolate. The enzyme catalyses IMP + H2O = 5-formamido-1-(5-phospho-D-ribosyl)imidazole-4-carboxamide. It participates in purine metabolism; IMP biosynthesis via de novo pathway; 5-formamido-1-(5-phospho-D-ribosyl)imidazole-4-carboxamide from 5-amino-1-(5-phospho-D-ribosyl)imidazole-4-carboxamide (10-formyl THF route): step 1/1. Its pathway is purine metabolism; IMP biosynthesis via de novo pathway; IMP from 5-formamido-1-(5-phospho-D-ribosyl)imidazole-4-carboxamide: step 1/1. The sequence is that of Bifunctional purine biosynthesis protein PurH from Ruegeria sp. (strain TM1040) (Silicibacter sp.).